We begin with the raw amino-acid sequence, 243 residues long: Ribonuclease 3 (243 aa).

Residues 19 to 144 (FNTLHKLLGF…LVGAIYLDRG (126 aa)) form the RNase III domain. Glutamate 61 serves as a coordination point for Mg(2+). Aspartate 65 is a catalytic residue. Residues asparagine 130 and glutamate 133 each coordinate Mg(2+). The active site involves glutamate 133. The region spanning 172–240 (SYKSLLIEWC…SKRAYYALQN (69 aa)) is the DRBM domain.

The protein belongs to the ribonuclease III family. In terms of assembly, homodimer. It depends on Mg(2+) as a cofactor.

Its subcellular location is the cytoplasm. It carries out the reaction Endonucleolytic cleavage to 5'-phosphomonoester.. Its function is as follows. Digests double-stranded RNA. Involved in the processing of primary rRNA transcript to yield the immediate precursors to the large and small rRNAs (23S and 16S). Processes some mRNAs, and tRNAs when they are encoded in the rRNA operon. Processes pre-crRNA and tracrRNA of type II CRISPR loci if present in the organism. In Zunongwangia profunda (strain DSM 18752 / CCTCC AB 206139 / SM-A87) (Wangia profunda), this protein is Ribonuclease 3 (rnc).